A 396-amino-acid chain; its full sequence is N-terminal EF-hand calcium-binding protein 3 (396 aa).

Positions 14–34 are enriched in pro residues; sequence PPAPQPQPQTPRHPQLAPDPG. The interval 14 to 36 is disordered; it reads PPAPQPQPQTPRHPQLAPDPGPA. The 36-residue stretch at 36 to 71 folds into the EF-hand domain; it reads AGHTLFQDVFRRADKNDDGKLSFEEFQNYFADGVLS. Ca(2+)-binding residues include Asp-49, Asn-51, Asp-53, Lys-55, and Glu-60. A required for interaction with APBA3 region spans residues 181 to 190; that stretch reads VEAQSRLCGS. The interval 197-220 is disordered; that stretch reads ALRSVSRSSTWSPGSSDTGRSSEA. A compositionally biased stretch (polar residues) spans 206 to 217; sequence TWSPGSSDTGRS. The ABM domain maps to 296–385; the sequence is LMAQRQVQVA…RAPDTLTTVF (90 aa).

Interacts with the N-terminal domain of APBA2. Interacts with NEK2. Interacts with APBA3; APBA3 seems to mediate the interaction between NECAB3 and HIF1AN. Phosphorylated by NEK2. In terms of tissue distribution, strongly expressed in heart and skeletal muscle, moderately in brain and pancreas.

It localises to the golgi apparatus. In terms of biological role, inhibits the interaction of APBA2 with amyloid-beta precursor protein (APP), and hence allows formation of amyloid-beta. May enhance the activity of HIF1A and thus promote glycolysis under normoxic conditions; the function requires its ABM domain and may implicate the stabilization of the interaction between HIF1AN and APBA3. The protein is N-terminal EF-hand calcium-binding protein 3 (NECAB3) of Homo sapiens (Human).